The following is a 323-amino-acid chain: tRNA dimethylallyltransferase (323 aa).

An ATP-binding site is contributed by 15-22 (GATGSGKT). Substrate is bound at residue 17-22 (TGSGKT). Interaction with substrate tRNA stretches follow at residues 40 to 43 (DSRQ) and 164 to 168 (QRLIR).

The protein belongs to the IPP transferase family. Monomer. It depends on Mg(2+) as a cofactor.

It catalyses the reaction adenosine(37) in tRNA + dimethylallyl diphosphate = N(6)-dimethylallyladenosine(37) in tRNA + diphosphate. Its function is as follows. Catalyzes the transfer of a dimethylallyl group onto the adenine at position 37 in tRNAs that read codons beginning with uridine, leading to the formation of N6-(dimethylallyl)adenosine (i(6)A). This Chloroherpeton thalassium (strain ATCC 35110 / GB-78) protein is tRNA dimethylallyltransferase.